We begin with the raw amino-acid sequence, 274 residues long: tRNA-cytidine(32) 2-sulfurtransferase (274 aa).

The PP-loop motif signature appears at 40–45; sequence SGGKDS. [4Fe-4S] cluster-binding residues include Cys-115, Cys-118, and Cys-206.

Belongs to the TtcA family. Homodimer. Mg(2+) serves as cofactor. The cofactor is [4Fe-4S] cluster.

The protein localises to the cytoplasm. It carries out the reaction cytidine(32) in tRNA + S-sulfanyl-L-cysteinyl-[cysteine desulfurase] + AH2 + ATP = 2-thiocytidine(32) in tRNA + L-cysteinyl-[cysteine desulfurase] + A + AMP + diphosphate + H(+). Its pathway is tRNA modification. In terms of biological role, catalyzes the ATP-dependent 2-thiolation of cytidine in position 32 of tRNA, to form 2-thiocytidine (s(2)C32). The sulfur atoms are provided by the cysteine/cysteine desulfurase (IscS) system. In Stutzerimonas stutzeri (strain A1501) (Pseudomonas stutzeri), this protein is tRNA-cytidine(32) 2-sulfurtransferase.